The following is a 147-amino-acid chain: Lysozyme C (147 aa).

The first 18 residues, 1–18 (MKVLLLLGFIFCSMAAHG), serve as a signal peptide directing secretion. Residues 19–147 (KRMERCEFAR…LSKYLEGCHL (129 aa)) enclose the C-type lysozyme domain. Intrachain disulfides connect Cys-24-Cys-145, Cys-48-Cys-133, Cys-83-Cys-99, and Cys-95-Cys-113. Residues Glu-53 and Asp-71 contribute to the active site.

This sequence belongs to the glycosyl hydrolase 22 family. In terms of assembly, monomer.

It localises to the secreted. The catalysed reaction is Hydrolysis of (1-&gt;4)-beta-linkages between N-acetylmuramic acid and N-acetyl-D-glucosamine residues in a peptidoglycan and between N-acetyl-D-glucosamine residues in chitodextrins.. In terms of biological role, lysozymes have primarily a bacteriolytic function; those in tissues and body fluids are associated with the monocyte-macrophage system and enhance the activity of immunoagents. The chain is Lysozyme C (LYZ) from Trichosurus vulpecula (Brush-tailed possum).